Consider the following 104-residue polypeptide: Naphthalene 1,2-dioxygenase/salicylate 5-hydroxylase systems, ferredoxin component (104 aa).

The Rieske domain occupies Ile-6–Leu-101. Residues Cys-45, His-47, Cys-64, and His-67 each coordinate [2Fe-2S] cluster.

Belongs to the bacterial ring-hydroxylating dioxygenase ferredoxin component family. Ferredoxin NagAb belongs to both the salicylate 5-hydroxylase (S5H) and the naphthalene 1,2-dioxygenase (NDO) multicomponent enzyme systems. The NDO multicomponent enzyme system is composed of an electron transfer component and a dioxygenase component (iron sulfur protein (ISP)). The electron transfer component is composed of a ferredoxin reductase (NagAa) and a ferredoxin (NagAb), and the dioxygenase component is formed by a large alpha subunit (NagAc) and a small beta subunit (NagAd). The S5H multicomponent enzyme system is composed of an electron transfer component and a monooxygenase component. The electron transfer component is composed of a ferredoxin reductase (NagAa) and a ferredoxin (NagAb), and the monooxygenase component is formed by a large subunit (NagG) and a small subunit (NagH). [2Fe-2S] cluster is required as a cofactor.

It participates in aromatic compound metabolism; naphthalene degradation. Functionally, component of two multicomponent enzyme systems which are involved in the catabolism of naphthalene. Plays a role as an electron transfer component for both salicylate 5-hydroxylase (S5H) and naphthalene 1,2-dioxygenase (NDO) systems, by transferring electrons to the oxygenase components. This is Naphthalene 1,2-dioxygenase/salicylate 5-hydroxylase systems, ferredoxin component from Ralstonia sp.